A 73-amino-acid polypeptide reads, in one-letter code: Potassium channel toxin alpha-KTx 27.4 (73 aa).

The N-terminal stretch at 1–26 (MKFLFLTLVLLYFTAILVFIVFPSYA) is a signal peptide.

It belongs to the short scorpion toxin superfamily. Potassium channel inhibitor family. Alpha-KTx 27 subfamily. In terms of processing, contains 4 disulfide bonds. As to expression, expressed by the venom gland.

The protein resides in the secreted. This Mesobuthus gibbosus (Mediterranean checkered scorpion) protein is Potassium channel toxin alpha-KTx 27.4.